We begin with the raw amino-acid sequence, 344 residues long: L-rhamnose-proton symporter (344 aa).

Transmembrane regions (helical) follow at residues 4–24 (AITM…CFYA), 38–58 (WSVG…ALLL), 68–88 (FSLS…IGNI), 101–121 (MGIG…TPII), 137–157 (TLLG…AGQL), 175–195 (LVLA…MNAA), 214–234 (LPSY…FCFI), 259–279 (VLLS…YAWG), 290–310 (ISWM…GLVL), and 323–343 (VLSL…IGMA).

The protein belongs to the L-rhamnose transporter (TC 2.A.7.6) family.

It localises to the cell inner membrane. The enzyme catalyses L-rhamnopyranose(in) + H(+)(in) = L-rhamnopyranose(out) + H(+)(out). Functionally, uptake of L-rhamnose across the cytoplasmic membrane with the concomitant transport of protons into the cell (symport system). This Shigella flexneri protein is L-rhamnose-proton symporter.